Consider the following 738-residue polypeptide: Alanine--tRNA ligase (738 aa).

Zn(2+)-binding residues include His-564, His-568, Cys-666, and His-670.

This sequence belongs to the class-II aminoacyl-tRNA synthetase family. As to quaternary structure, homotetramer. The cofactor is Zn(2+).

The protein resides in the cytoplasm. The catalysed reaction is tRNA(Ala) + L-alanine + ATP = L-alanyl-tRNA(Ala) + AMP + diphosphate. Catalyzes the attachment of alanine to tRNA(Ala) in a two-step reaction: alanine is first activated by ATP to form Ala-AMP and then transferred to the acceptor end of tRNA(Ala). Also edits incorrectly charged Ser-tRNA(Ala) and Gly-tRNA(Ala) via its editing domain. The protein is Alanine--tRNA ligase (alaS) of Yersinia pestis bv. Antiqua (strain Antiqua).